A 486-amino-acid polypeptide reads, in one-letter code: Glutamate--tRNA ligase 1 (486 aa).

The 'HIGH' region motif lies at 9-19; sequence PSPTGMLHIGG. A 'KMSKS' region motif is present at residues 259–263; the sequence is KLSKR. ATP is bound at residue K262.

Belongs to the class-I aminoacyl-tRNA synthetase family. Glutamate--tRNA ligase type 1 subfamily. In terms of assembly, monomer.

Its subcellular location is the cytoplasm. The enzyme catalyses tRNA(Glu) + L-glutamate + ATP = L-glutamyl-tRNA(Glu) + AMP + diphosphate. Its function is as follows. Catalyzes the attachment of glutamate to tRNA(Glu) in a two-step reaction: glutamate is first activated by ATP to form Glu-AMP and then transferred to the acceptor end of tRNA(Glu). The polypeptide is Glutamate--tRNA ligase 1 (Hyphomonas neptunium (strain ATCC 15444)).